Here is a 306-residue protein sequence, read N- to C-terminus: Recombination-associated protein RdgC (306 aa).

The protein belongs to the RdgC family.

The protein localises to the cytoplasm. Its subcellular location is the nucleoid. In terms of biological role, may be involved in recombination. In Pseudomonas aeruginosa (strain LESB58), this protein is Recombination-associated protein RdgC.